A 320-amino-acid polypeptide reads, in one-letter code: Protein LATERAL ROOT PRIMORDIUM 1 (320 aa).

Residues 90–110 form a disordered region; sequence QTTVGTSSNNSGSGSGASGTA. Zn(2+)-binding residues include Cys-112, Cys-115, Cys-123, Cys-128, Cys-132, and Cys-139. A DNA-binding region (zn(2)-C6 fungal-type; degenerate) is located at residues 112 to 139; sequence CQDCGNQAKKECKQRRCRTCCKSRGFDC. Residues 150–223 are disordered; that stretch reads AARRRERQVM…QDGGGSREAW (74 aa). A compositionally biased stretch (low complexity) spans 168–177; that stretch reads GSSLSTSSGT. A compositionally biased stretch (polar residues) spans 193–214; it reads ATSHTSTSNTPPQSFETSSSRQ. Residues 256–259 carry the Required for homo- and heterodimerization motif; the sequence is IGGH.

Belongs to the SHI protein family. Homodimer. In terms of tissue distribution, restricted to lateral root primordia.

Its subcellular location is the nucleus. Its function is as follows. Transcription activator that binds DNA on 5'-ACTCTAC-3' and promotes auxin homeostasis-regulating gene expression (e.g. YUC genes), as well as genes affecting stamen development, cell expansion and timing of flowering. Synergistically with other SHI-related proteins, regulates gynoecium, stamen and leaf development in a dose-dependent manner, controlling apical-basal patterning. Promotes style and stigma formation, and influence vascular development during gynoecium development. May also have a role in the formation and/or maintenance of the shoot apical meristem (SAM). Modulates root growth. This Arabidopsis thaliana (Mouse-ear cress) protein is Protein LATERAL ROOT PRIMORDIUM 1 (LRP1).